A 524-amino-acid chain; its full sequence is MFSLQDLCRKHLFILPDVFGEHVLQQLGLYWKRHGSLQRIGDDHILIRRDLILSTNEALKMAGEEGNNEVVKLLLLWEGNLHYAIIGALQGDQYDLIHKYENQIEDYHHILPLIQDAKTFEKCHALERFCDVPCLLEHATKHNMLPILQKYQEELSIRVYLRETLFELACLWQRYDVLKWIEQTMHVYDLKIMFNIAISKRDLSMYSLGYVLLFDRGNIEATFLTQHLEKTAAKGLLHFVLETLKYGGNLNIVLSQAVKYNHRKLLDYFLRQLPRKNIEKLLLLAVQEKASKKTLNLLLSHLNYSVKHIKKLLRYVIEYESTLVIKLLLKKRVNLIDAVLEKNVRYFSAIKVRTIMDELSISPERVIKMAIQKMRTDIVIQTSYIWEDDLERLIRLKNMVYTIKYEHGKKMLIKVIHGIYKNLLYGEKEKVMFHLAKLYVAQNAATQFRDICKDCCKLDVARFKPRFKQLILDCLEMVTKKSCFSIIEILENYIISLFVMKVITEEEKNLCLELLYKVISYKTI.

This sequence belongs to the asfivirus MGF 505 family.

Functionally, plays a role in virus cell tropism, and may be required for efficient virus replication in macrophages. This chain is Protein MGF 505-2R, found in Ornithodoros (relapsing fever ticks).